The chain runs to 642 residues: Ribosome biogenesis protein BOP1 homolog (642 aa).

Positions 1 to 28 are disordered; the sequence is MIHKRMNSTELERTSKKIDDYDSSDEED. The segment covering 10-20 has biased composition (basic and acidic residues); sequence ELERTSKKIDD. 6 WD repeats span residues 311 to 351, 353 to 393, 472 to 510, 513 to 552, 556 to 595, and 612 to 642; these read GHSG…CLKT, SLDG…DRHR, RLKGLMTVLSFHPSEPFLFVGTQRYIRIYDLAKCQLKKK, TGSQWMSCMHVDFRGDNVFVGGHDRVFSWIDLQLSSKPWK, HHTAAIRGVTQHARCPLIATVSDDSTAIVYYARISSDSLK, and KNGLSILAAIFHPSQPWLITAHVDGSIALFT.

It belongs to the WD repeat BOP1/ERB1 family.

The protein localises to the nucleus. It localises to the nucleolus. The protein resides in the nucleoplasm. Its function is as follows. Required for maturation of ribosomal RNAs and formation of the large ribosomal subunit. The chain is Ribosome biogenesis protein BOP1 homolog from Brugia malayi (Filarial nematode worm).